The primary structure comprises 357 residues: MRDSIYLLWIDNRLVVIIMMVMMVSCRCVLGLENINPIFFDEGLSHLFGEGNLIRSPDDRSVRLLLDKYTGSGFISSSMYQHGFFSSLIKLPGAYTAGIVVAFYTSNGDVFVKDHDELDIEFLGNLEGKPWRFQTNMYGNGSTNRGREERYRLWFDPSKEFHRYSILWTPTKIIFWVDDVPIREILRKEEMNGDYPQKPMSLYATIWDASSWATSGGKFGVDYTFSPFVSEFKDIALDGCNVSDSFPGENNNNNIGNYNNINCSVSDQFLMSNDYSTISPKQATAMRRFRERYMYYSYCYDTIRYSVPPPECVIVTAEKNRFRDTGRLKFGGSHPKVHKARKKRRRNRSTPVVSADL.

The signal sequence occupies residues 1-31 (MRDSIYLLWIDNRLVVIIMMVMMVSCRCVLG). Positions 32 to 232 (LENINPIFFD…YTFSPFVSEF (201 aa)) constitute a GH16 domain. Glutamate 117 functions as the Nucleophile in the catalytic mechanism. Glutamate 121 serves as the catalytic Proton donor. Residues glutamate 121 and 134–136 (QTN) contribute to the xyloglucan site. Asparagine 140 carries N-linked (GlcNAc...) asparagine glycosylation. Xyloglucan-binding positions include 144-148 (NRGRE), 211-212 (SW), and glycine 216. N-linked (GlcNAc...) asparagine glycans are attached at residues asparagine 241 and asparagine 262. An intrachain disulfide couples cysteine 299 to cysteine 312. Residue arginine 304 coordinates xyloglucan. The disordered stretch occupies residues 326-357 (GRLKFGGSHPKVHKARKKRRRNRSTPVVSADL). Over residues 335-348 (PKVHKARKKRRRNR) the composition is skewed to basic residues. Residue asparagine 347 is glycosylated (N-linked (GlcNAc...) asparagine).

Belongs to the glycosyl hydrolase 16 family. XTH group 3 subfamily. In terms of processing, contains at least one intrachain disulfide bond essential for its enzymatic activity.

The protein localises to the secreted. The protein resides in the cell wall. Its subcellular location is the extracellular space. It is found in the apoplast. The catalysed reaction is breaks a beta-(1-&gt;4) bond in the backbone of a xyloglucan and transfers the xyloglucanyl segment on to O-4 of the non-reducing terminal glucose residue of an acceptor, which can be a xyloglucan or an oligosaccharide of xyloglucan.. Its function is as follows. Catalyzes xyloglucan endohydrolysis (XEH) and/or endotransglycosylation (XET). Cleaves and religates xyloglucan polymers, an essential constituent of the primary cell wall, and thereby participates in cell wall construction of growing tissues. The polypeptide is Probable xyloglucan endotransglucosylase/hydrolase protein 29 (XTH29) (Arabidopsis thaliana (Mouse-ear cress)).